A 156-amino-acid chain; its full sequence is Small ribosomal subunit protein uS7 (156 aa).

Belongs to the universal ribosomal protein uS7 family. In terms of assembly, part of the 30S ribosomal subunit. Contacts proteins S9 and S11.

Functionally, one of the primary rRNA binding proteins, it binds directly to 16S rRNA where it nucleates assembly of the head domain of the 30S subunit. Is located at the subunit interface close to the decoding center, probably blocks exit of the E-site tRNA. This Leuconostoc mesenteroides subsp. mesenteroides (strain ATCC 8293 / DSM 20343 / BCRC 11652 / CCM 1803 / JCM 6124 / NCDO 523 / NBRC 100496 / NCIMB 8023 / NCTC 12954 / NRRL B-1118 / 37Y) protein is Small ribosomal subunit protein uS7.